The sequence spans 157 residues: Protein SINE4 (157 aa).

Residues 104–157 (VTSSSDTTKAKKKTTIRRFVSVTMVLLLSWVLVVLMNHFDHLSMNTQIITLVPT) enclose the KASH domain. A helical transmembrane segment spans residues 122 to 142 (FVSVTMVLLLSWVLVVLMNHF). Residues 154–157 (LVPT) carry the Required for nuclear localization motif.

As to quaternary structure, interacts with SUN1 and SUN2.

It is found in the nucleus membrane. The protein is Protein SINE4 of Arabidopsis thaliana (Mouse-ear cress).